A 666-amino-acid polypeptide reads, in one-letter code: L-aspartate N-monooxygenase (nitrosuccinate-forming) (666 aa).

A disordered region spans residues 645-666; that stretch reads LPAYEDPGVRCPSDDRLTEVTA. The segment covering 656-666 has biased composition (basic and acidic residues); the sequence is PSDDRLTEVTA.

Belongs to the nitrosuccinic acid synthase family. The cofactor is FAD.

The catalysed reaction is L-aspartate + 3 NADPH + 3 O2 + 2 H(+) = 2-nitrobutanedioate + 3 NADP(+) + 4 H2O. It functions in the pathway antibiotic biosynthesis. Its function is as follows. Part of a gene cluster involved in the biosynthesis of cremeomycin, a light-sensitive o-diazoquinone with antibacterial and antiproliferative effects. Catalyzes the iterative oxidation of L-aspartic acid to nitrosuccinic acid (2-nitrobutanedioate) via N-hydroxyaspartic acid and nitrososuccinic acid. The chain is L-aspartate N-monooxygenase (nitrosuccinate-forming) from Streptomyces cremeus.